Reading from the N-terminus, the 81-residue chain is N.vectensis toxin 4 (81 aa).

Residues 1–20 (MRSSWMFVICFAMLILYTNG) form the signal peptide. Intrachain disulfides connect C46–C75, C48–C70, and C63–C76.

In terms of tissue distribution, expressed in ectodermal gland cells. In adult female tissues, highly transcribed in mesenteries (gametes-producing tissue) and slightly transcribed in tentacles, pharynx and physa.

In terms of biological role, has toxic effects on zebrafish larvae. It causes contractile paralysis and twitching of the tail within 30 minutes, followed by death within 40 minutes. Does not show any toxicity when injected into arthropods (cherry shrimps or grass shrimps). This is N.vectensis toxin 4 from Nematostella vectensis (Starlet sea anemone).